We begin with the raw amino-acid sequence, 447 residues long: DNA primase DnaG (447 aa).

The region spanning D200 to E274 is the Toprim domain. Residues E206, D248, and D250 each coordinate Mg(2+).

It belongs to the archaeal DnaG primase family. Forms a ternary complex with MCM helicase and DNA. Component of the archaeal exosome complex. Requires Mg(2+) as cofactor.

It catalyses the reaction ssDNA + n NTP = ssDNA/pppN(pN)n-1 hybrid + (n-1) diphosphate.. RNA polymerase that catalyzes the synthesis of short RNA molecules used as primers for DNA polymerase during DNA replication. Also part of the exosome, which is a complex involved in RNA degradation. Acts as a poly(A)-binding protein that enhances the interaction between heteromeric, adenine-rich transcripts and the exosome. This chain is DNA primase DnaG, found in Pyrococcus horikoshii (strain ATCC 700860 / DSM 12428 / JCM 9974 / NBRC 100139 / OT-3).